The chain runs to 292 residues: Small ribosomal subunit biogenesis GTPase RsgA (292 aa).

Residues Arg64–Leu221 form the CP-type G domain. GTP contacts are provided by residues Asn113–Asp116 and Gly164–Thr172. Residues Cys245, Cys250, His252, and Cys258 each coordinate Zn(2+).

The protein belongs to the TRAFAC class YlqF/YawG GTPase family. RsgA subfamily. In terms of assembly, monomer. Associates with 30S ribosomal subunit, binds 16S rRNA. The cofactor is Zn(2+).

It localises to the cytoplasm. One of several proteins that assist in the late maturation steps of the functional core of the 30S ribosomal subunit. Helps release RbfA from mature subunits. May play a role in the assembly of ribosomal proteins into the subunit. Circularly permuted GTPase that catalyzes slow GTP hydrolysis, GTPase activity is stimulated by the 30S ribosomal subunit. In Clostridium botulinum (strain Okra / Type B1), this protein is Small ribosomal subunit biogenesis GTPase RsgA.